Here is a 710-residue protein sequence, read N- to C-terminus: Polyribonucleotide nucleotidyltransferase (710 aa).

Asp-487 and Asp-493 together coordinate Mg(2+). Positions Pro-554–Ile-613 constitute a KH domain. Positions Gly-623–Lys-691 constitute an S1 motif domain.

The protein belongs to the polyribonucleotide nucleotidyltransferase family. Requires Mg(2+) as cofactor.

The protein resides in the cytoplasm. The catalysed reaction is RNA(n+1) + phosphate = RNA(n) + a ribonucleoside 5'-diphosphate. In terms of biological role, involved in mRNA degradation. Catalyzes the phosphorolysis of single-stranded polyribonucleotides processively in the 3'- to 5'-direction. The polypeptide is Polyribonucleotide nucleotidyltransferase (Bacillus cytotoxicus (strain DSM 22905 / CIP 110041 / 391-98 / NVH 391-98)).